Here is a 297-residue protein sequence, read N- to C-terminus: MDIPVEFLTAQEPLSYGHIPPVYWKELLNWIDRILTHNQATPNTWEATHMVLLKLHGTLSFSNPAQLPLVAAACLQIAAKHTEAHSRLADPDYITMLGDGVYTKPSLLLTETMALFIVGGHVGAYTLAACDWLLGSLPFSQAENDLLHPYMYHYIKLSYRHRTPDYHSSPALRAAVVIAAAVKGADLLEMNMLFIMMYHLTHISTASLSLGLTHFTAALQRQINLDFAEAEQREAAERRALLEREREQQLQEARERLDDVMAVLEAEVAITITTATEGTDAEDTSEVDVINVVDPIG.

The Cyclin N-terminal domain occupies 21–113; that stretch reads PVYWKELLNW…KPSLLLTETM (93 aa). Positions 21–113 are transcription activation domain; the sequence is PVYWKELLNW…KPSLLLTETM (93 aa). Residues 222–270 adopt a coiled-coil conformation; sequence QINLDFAEAEQREAAERRALLEREREQQLQEARERLDDVMAVLEAEVAI.

The protein belongs to the cyclin family. Interacts (via transcription activation domain) with host TAF9 in vitro. Interacts with host CDK3 and CDK8.

It localises to the host nucleus. Transforming protein which induces the development of dermal sarcomas. Induces positive and negative regulation of transcription from host and viral promoters by interacting with various cellular factors involved in protein transcription regulation. This is Retroviral cyclin (orfA) from Sander vitreus (Walleye).